The following is a 223-amino-acid chain: DNA mismatch repair protein MutH (223 aa).

This sequence belongs to the MutH family.

It is found in the cytoplasm. Functionally, sequence-specific endonuclease that cleaves unmethylated GATC sequences. It is involved in DNA mismatch repair. This Shewanella oneidensis (strain ATCC 700550 / JCM 31522 / CIP 106686 / LMG 19005 / NCIMB 14063 / MR-1) protein is DNA mismatch repair protein MutH.